The following is a 334-amino-acid chain: Malate dehydrogenase 2 (334 aa).

12–18 (GAAGRVA) provides a ligand contact to NAD(+). Substrate-binding residues include arginine 93 and arginine 99. Residues asparagine 106, glutamine 113, and 130-132 (VGN) contribute to the NAD(+) site. Substrate-binding residues include asparagine 132 and arginine 166. The active-site Proton acceptor is the histidine 191.

Belongs to the LDH/MDH superfamily. MDH type 2 family.

The enzyme catalyses (S)-malate + NAD(+) = oxaloacetate + NADH + H(+). Functionally, catalyzes the reversible oxidation of malate to oxaloacetate. The polypeptide is Malate dehydrogenase 2 (Albidiferax ferrireducens (strain ATCC BAA-621 / DSM 15236 / T118) (Rhodoferax ferrireducens)).